Here is an 85-residue protein sequence, read N- to C-terminus: Putative membrane protein insertion efficiency factor (85 aa).

This sequence belongs to the UPF0161 family.

Its subcellular location is the cell membrane. Could be involved in insertion of integral membrane proteins into the membrane. The sequence is that of Putative membrane protein insertion efficiency factor from Baumannia cicadellinicola subsp. Homalodisca coagulata.